The following is a 474-amino-acid chain: Dol-P-Glc:Glc(2)Man(9)GlcNAc(2)-PP-Dol alpha-1,2-glucosyltransferase (474 aa).

Over 1–6 the chain is Cytoplasmic; sequence MAQLEG. The chain crosses the membrane as a helical span at residues 7–27; it reads YYFSAALSCTFLVSCLLFSAF. Over 28-64 the chain is Extracellular; the sequence is SRALREPYMDEIFHLPQAQRYCEGRFSLSQWDPMITT. A helical transmembrane segment spans residues 65–85; that stretch reads LPGLYLVSVGVVKPASWILGW. Over 86–97 the chain is Cytoplasmic; the sequence is SEHVVCSIGMLR. Residues 98–118 traverse the membrane as a helical segment; the sequence is FVNLLFSVGNFYLLYLLFRKI. The Extracellular segment spans residues 119–126; that stretch reads QPRNKASS. A helical transmembrane segment spans residues 127-147; it reads SIQRILSTLTLAVFPTLYFFN. Residues 148 to 150 are Cytoplasmic-facing; it reads FLY. Residues 151–171 traverse the membrane as a helical segment; it reads YTEAGSVFFTLFAYLMCLYGN. Residues 172–175 are Extracellular-facing; sequence HRTS. A helical membrane pass occupies residues 176-196; the sequence is ALLGFCGFMFRQTNIIWAAFC. The Cytoplasmic segment spans residues 197–256; that stretch reads AGHIIAQKCSEAWKTELQKKKEERLPPAKGPLSELRRVLQFLLMYSMSLKNLSMLFLLTW. A helical membrane pass occupies residues 257 to 277; it reads PYMLLLLAFFVFVVVNGGIVV. The Extracellular portion of the chain corresponds to 278–283; it reads GDRSSH. Residues 284–304 traverse the membrane as a helical segment; that stretch reads EACLHFPQLFYFFSFTAFFSF. Residues 305–317 lie on the Cytoplasmic side of the membrane; that stretch reads PHLLSPTKVKTFL. The helical transmembrane segment at 318–338 threads the bilayer; the sequence is SLVWKRRVQFSVITLVSVFLV. The Extracellular portion of the chain corresponds to 339–365; it reads WKFTYVHKYLLADNRHYTFYVWKRVFQ. A helical membrane pass occupies residues 366–386; sequence RHEIVKYLLVPAYMFAGWAVA. The Cytoplasmic segment spans residues 387–392; that stretch reads DSLKSK. The helical transmembrane segment at 393 to 413 threads the bilayer; it reads SIFWNLMFFVCLVASTVPQKL. Topologically, residues 414 to 436 are extracellular; it reads LEFRYFILPYIIYRLNMPLPPIS. Residues 437–457 form a helical membrane-spanning segment; sequence RLVCELGCYAVVNFLTFYIFL. Over 458–473 the chain is Cytoplasmic; it reads NKTFQWSDSHDIQRFM.

It belongs to the ALG10 glucosyltransferase family. Interacts with KCNH1; may regulate KCNH1, possibly by regulating its N-glycosylation. Interacts with KCNH2; may reduce KCNH2 sensitivity to classic proarrhythmic drug blockade, possibly by regulating its N-glycosylation. As to expression, highly expressed in brain, skeletal muscle, uterus, small intestine and liver. Moderately expressed in lung and kidney. Weakly expressed in heart and stomach.

It is found in the endoplasmic reticulum membrane. It carries out the reaction an alpha-D-Glc-(1-&gt;3)-alpha-D-Glc-(1-&gt;3)-alpha-D-Man-(1-&gt;2)-alpha-D-Man-(1-&gt;2)-alpha-D-Man-(1-&gt;3)-[alpha-D-Man-(1-&gt;2)-alpha-D-Man-(1-&gt;3)-[alpha-D-Man-(1-&gt;2)-alpha-D-Man-(1-&gt;6)]-alpha-D-Man-(1-&gt;6)]-beta-D-Man-(1-&gt;4)-beta-D-GlcNAc-(1-&gt;4)-alpha-D-GlcNAc-diphospho-di-trans,poly-cis-dolichol + a di-trans,poly-cis-dolichyl beta-D-glucosyl phosphate = a alpha-D-Glc-(1-&gt;2)-alpha-D-Glc-(1-&gt;3)-alpha-D-Glc-(1-&gt;3)-alpha-D-Man-(1-&gt;2)-alpha-D-Man-(1-&gt;2)-alpha-D-Man-(1-&gt;3)-[alpha-D-Man-(1-&gt;2)-alpha-D-Man-(1-&gt;3)-[alpha-D-Man-(1-&gt;2)-alpha-D-Man-(1-&gt;6)]-alpha-D-Man-(1-&gt;6)]-beta-D-Man-(1-&gt;4)-beta-D-GlcNAc-(1-&gt;4)-alpha-D-GlcNAc-diphospho-di-trans,poly-cis-dolichol + a di-trans,poly-cis-dolichyl phosphate + H(+). Its pathway is protein modification; protein glycosylation. Its function is as follows. Dol-P-Glc:Glc(2)Man(9)GlcNAc(2)-PP-Dol alpha-1,2-glucosyltransferase that operates in the biosynthetic pathway of dolichol-linked oligosaccharides, the glycan precursors employed in protein asparagine (N)-glycosylation. The assembly of dolichol-linked oligosaccharides begins on the cytosolic side of the endoplasmic reticulum membrane and finishes in its lumen. The sequential addition of sugars to dolichol pyrophosphate produces dolichol-linked oligosaccharides containing fourteen sugars, including two GlcNAcs, nine mannoses and three glucoses. Once assembled, the oligosaccharide is transferred from the lipid to nascent proteins by oligosaccharyltransferases. In the lumen of the endoplasmic reticulum, adds the third and last glucose residue from dolichyl phosphate glucose (Dol-P-Glc) onto the lipid-linked oligosaccharide intermediate Glc(2)Man(9)GlcNAc(2)-PP-Dol to produce Glc(3)Man(9)GlcNAc(2)-PP-Dol. The chain is Dol-P-Glc:Glc(2)Man(9)GlcNAc(2)-PP-Dol alpha-1,2-glucosyltransferase from Rattus norvegicus (Rat).